We begin with the raw amino-acid sequence, 469 residues long: Phosphatidylinositol 4-kinase type 2-beta (469 aa).

Residues 1 to 84 (MAEACEPTRP…LDRTRTTSSE (84 aa)) are disordered. S37 is subject to Phosphoserine. One can recognise a PI3K/PI4K catalytic domain in the interval 108 to 439 (GVFPERISQG…AQMPCVIVEC (332 aa)). The G-loop stretch occupies residues 114–120 (ISQGSSG). ATP is bound by residues S121 and K136. The tract at residues 141–143 (EPY) is important for substrate binding. Positions 149–162 (KWTKYVHKVCCPCC) are important for interaction with membranes. ATP contacts are provided by residues 245 to 248 (QLFV) and 259 to 260 (RR). Positions 252–260 (KEAEYWLRR) are important for interaction with membranes. A catalytic loop region spans residues 289–297 (RNTDRGNDN). Positions 330-350 (AIDNGLAFPFKHPDEWRAYPF) are activation loop. D332 serves as a coordination point for ATP. Residues 345-354 (WRAYPFHWAW) form an important for interaction with membranes region.

This sequence belongs to the PI3/PI4-kinase family. Type II PI4K subfamily.

The protein resides in the cytoplasm. The protein localises to the cytosol. It is found in the golgi apparatus membrane. It localises to the endoplasmic reticulum membrane. Its subcellular location is the cell membrane. The protein resides in the early endosome membrane. The catalysed reaction is a 1,2-diacyl-sn-glycero-3-phospho-(1D-myo-inositol) + ATP = a 1,2-diacyl-sn-glycero-3-phospho-(1D-myo-inositol 4-phosphate) + ADP + H(+). Functionally, together with PI4K2A and the type III PI4Ks (PIK4CA and PIK4CB) it contributes to the overall PI4-kinase activity of the cell. This contribution may be especially significant in plasma membrane, endosomal and Golgi compartments. The phosphorylation of phosphatidylinositol (PI) to PI4P is the first committed step in the generation of phosphatidylinositol 4,5-bisphosphate (PIP2), a precursor of the second messenger inositol 1,4,5-trisphosphate (InsP3). Contributes to the production of InsP3 in stimulated cells and is likely to be involved in the regulation of vesicular trafficking. The sequence is that of Phosphatidylinositol 4-kinase type 2-beta (Pi4k2b) from Mus musculus (Mouse).